A 369-amino-acid chain; its full sequence is Leucine carboxyl methyltransferase 1 (369 aa).

S-adenosyl-L-methionine contacts are provided by residues Arg-84, Gly-108, Asp-132, 187-188 (DL), and Glu-215.

This sequence belongs to the methyltransferase superfamily. LCMT family.

It catalyses the reaction [phosphatase 2A protein]-C-terminal L-leucine + S-adenosyl-L-methionine = [phosphatase 2A protein]-C-terminal L-leucine methyl ester + S-adenosyl-L-homocysteine. Its function is as follows. Methylates the carboxyl group of the C-terminal leucine residue of protein phosphatase 2A catalytic subunits to form alpha-leucine ester residues. This is Leucine carboxyl methyltransferase 1 (PPM1) from Debaryomyces hansenii (strain ATCC 36239 / CBS 767 / BCRC 21394 / JCM 1990 / NBRC 0083 / IGC 2968) (Yeast).